Reading from the N-terminus, the 258-residue chain is MVLIRVLANLLILQLSYAQKSSELVIGGDECNINEHRSLVAFFNSTGFFCSGTLINEEWVLTAAHCDNTNFQMKLGVHSKKVLNEDEQTRNPKEKFICPNKKNDEVLDKDIMLIKLDSRVSNSEHIVPLSLPSSPPSVGSVCHIMGWGSITPIKVTYPDVPYCAYINLLDDAVCQAGYPELLTEYRTLCAGILEGGKDTCGGDSGGPLICNGQFQGIVSFGAHPCGQGLKPGVYTKVFDYNHWIQSIIAGNTTVTCPQ.

An N-terminal signal peptide occupies residues 1-18; it reads MVLIRVLANLLILQLSYA. Residues 19–24 constitute a propeptide that is removed on maturation; that stretch reads QKSSEL. Residues 25-249 enclose the Peptidase S1 domain; that stretch reads VIGGDECNIN…YNHWIQSIIA (225 aa). 6 disulfide bridges follow: Cys-31/Cys-163, Cys-50/Cys-66, Cys-98/Cys-256, Cys-142/Cys-210, Cys-174/Cys-189, and Cys-200/Cys-225. N-linked (GlcNAc...) asparagine glycosylation occurs at Asn-44. Active-site charge relay system residues include His-65 and Asp-110. Residue Ser-204 is the Charge relay system of the active site. A glycan (N-linked (GlcNAc...) asparagine) is linked at Asn-251.

This sequence belongs to the peptidase S1 family. Snake venom subfamily. As to quaternary structure, monomer. Expressed by the venom gland.

It localises to the secreted. Its function is as follows. Thrombin-like snake venom serine protease that shows strong blood coagulation activity in vitro. The sequence is that of Thrombin-like enzyme saxthrombin from Gloydius intermedius (Central Asian pit viper).